Reading from the N-terminus, the 1039-residue chain is Multidrug resistance protein MdtB (1039 aa).

A run of 12 helical transmembrane segments spans residues 16–36, 342–362, 373–393, 396–416, 440–460, 472–492, 537–557, 863–883, 888–908, 911–931, 968–988, and 1002–1022; these read FILR…AGII, DVQF…YVFL, VAVP…GFSI, LTLM…IVVI, IGFT…PLLF, FAVT…TLTP, WLTL…YLLI, LGGT…VLGV, FIHP…ALLA, MAGS…IGIV, ILMT…STGV, and GGLV…YLLF.

It belongs to the resistance-nodulation-cell division (RND) (TC 2.A.6) family. MdtB subfamily. Part of a tripartite efflux system composed of MdtA, MdtB and MdtC. MdtB forms a heteromultimer with MdtC.

The protein resides in the cell inner membrane. The protein is Multidrug resistance protein MdtB of Serratia proteamaculans (strain 568).